The chain runs to 141 residues: Nucleoside diphosphate kinase (141 aa).

Residues Lys-11, Phe-59, Arg-87, Thr-93, Arg-104, and Asn-114 each coordinate ATP. Residue His-117 is the Pros-phosphohistidine intermediate of the active site.

This sequence belongs to the NDK family. Homotetramer. It depends on Mg(2+) as a cofactor.

The protein localises to the cytoplasm. The catalysed reaction is a 2'-deoxyribonucleoside 5'-diphosphate + ATP = a 2'-deoxyribonucleoside 5'-triphosphate + ADP. It carries out the reaction a ribonucleoside 5'-diphosphate + ATP = a ribonucleoside 5'-triphosphate + ADP. Major role in the synthesis of nucleoside triphosphates other than ATP. The ATP gamma phosphate is transferred to the NDP beta phosphate via a ping-pong mechanism, using a phosphorylated active-site intermediate. The protein is Nucleoside diphosphate kinase of Burkholderia mallei (strain NCTC 10247).